Here is a 144-residue protein sequence, read N- to C-terminus: Ribonuclease VapC45 (144 aa).

2 residues coordinate Mg(2+): Asp-7 and Asp-102.

The protein belongs to the PINc/VapC protein family. It depends on Mg(2+) as a cofactor.

In terms of biological role, toxic component of a type II toxin-antitoxin (TA) system. An RNase. Its cognate antitoxin is VapB45. The chain is Ribonuclease VapC45 from Mycobacterium tuberculosis (strain CDC 1551 / Oshkosh).